We begin with the raw amino-acid sequence, 390 residues long: MPVLTDPLQILQALIRCPSVTPHEAGALSTLEQFLTKMGFHVERPIFADKNTEDVENLYAKMGKEGPHLMFAGHTDVVPPGDLENWKYPPFEGVIDQGKLYGRGAVDMKGGIACFVAAFARVLEKRTIKGRVSLLITGDEEGPALNGTVKLLKWAEQKGEKWTAALVGEPTSVKTVGDVIKIGRRGSISGIMTVKGRQGHVAFPERAANPLPLASKLIQSLIQTTLDEGTENFQPSNLELTAIDTGNPAMNVIPAQATVHFNIRYNDLWTKEMLMAEIENRLALVQSKNNNGQYPYYQLEWIPSLGDVFLTKNDKLINTLSNAIKSVTGNIPECSTSGGTSDARFIKDYCPVIEFGLPGQTMHMVDECVTVDAMETLTSIYECFIVDFFA.

His74 is a Zn(2+) binding site. Residue Asp76 is part of the active site. Residue Asp107 coordinates Zn(2+). The active-site Proton acceptor is the Glu140. 3 residues coordinate Zn(2+): Glu141, Glu169, and His363.

It belongs to the peptidase M20A family. DapE subfamily. As to quaternary structure, homodimer. Zn(2+) serves as cofactor. It depends on Co(2+) as a cofactor.

The catalysed reaction is N-succinyl-(2S,6S)-2,6-diaminopimelate + H2O = (2S,6S)-2,6-diaminopimelate + succinate. The protein operates within amino-acid biosynthesis; L-lysine biosynthesis via DAP pathway; LL-2,6-diaminopimelate from (S)-tetrahydrodipicolinate (succinylase route): step 3/3. In terms of biological role, catalyzes the hydrolysis of N-succinyl-L,L-diaminopimelic acid (SDAP), forming succinate and LL-2,6-diaminopimelate (DAP), an intermediate involved in the bacterial biosynthesis of lysine and meso-diaminopimelic acid, an essential component of bacterial cell walls. The sequence is that of Succinyl-diaminopimelate desuccinylase from Bartonella henselae (strain ATCC 49882 / DSM 28221 / CCUG 30454 / Houston 1) (Rochalimaea henselae).